The chain runs to 199 residues: dTTP/UTP pyrophosphatase (199 aa).

The active-site Proton acceptor is the aspartate 79.

Belongs to the Maf family. YhdE subfamily. A divalent metal cation serves as cofactor.

It is found in the cytoplasm. The catalysed reaction is dTTP + H2O = dTMP + diphosphate + H(+). The enzyme catalyses UTP + H2O = UMP + diphosphate + H(+). Functionally, nucleoside triphosphate pyrophosphatase that hydrolyzes dTTP and UTP. May have a dual role in cell division arrest and in preventing the incorporation of modified nucleotides into cellular nucleic acids. This chain is dTTP/UTP pyrophosphatase, found in Porphyromonas gingivalis (strain ATCC 33277 / DSM 20709 / CIP 103683 / JCM 12257 / NCTC 11834 / 2561).